The primary structure comprises 208 residues: Small ribosomal subunit protein uS4 (208 aa).

Positions 97-160 (TRLDNVCYRM…QKQLRVQEAL (64 aa)) constitute an S4 RNA-binding domain.

This sequence belongs to the universal ribosomal protein uS4 family. Part of the 30S ribosomal subunit. Contacts protein S5. The interaction surface between S4 and S5 is involved in control of translational fidelity.

In terms of biological role, one of the primary rRNA binding proteins, it binds directly to 16S rRNA where it nucleates assembly of the body of the 30S subunit. With S5 and S12 plays an important role in translational accuracy. The sequence is that of Small ribosomal subunit protein uS4 from Xanthomonas axonopodis pv. citri (strain 306).